Reading from the N-terminus, the 83-residue chain is Small ribosomal subunit protein uS17c (83 aa).

This sequence belongs to the universal ribosomal protein uS17 family. In terms of assembly, part of the 30S ribosomal subunit.

It is found in the plastid. Its subcellular location is the chloroplast. Functionally, one of the primary rRNA binding proteins, it binds specifically to the 5'-end of 16S ribosomal RNA. This Porphyra purpurea (Red seaweed) protein is Small ribosomal subunit protein uS17c (rps17).